The sequence spans 931 residues: 3'-5' exonuclease DinG (931 aa).

The 156-residue stretch at 7–162 (VVIDVETTGN…DSDAEVTGLI (156 aa)) folds into the Exonuclease domain. The region spanning 250 to 510 (LSELMPGYEK…KKMRQLFQRN (261 aa)) is the Helicase ATP-binding domain. Residue 284 to 291 (APPGIGKT) coordinates ATP. The short motif at 462–465 (DEAH) is the DEAH box element. Residues 741–897 (DTARYIELMA…TIIILDRRIK (157 aa)) form the Helicase C-terminal domain.

This sequence belongs to the helicase family. DinG subfamily. Type 2 sub-subfamily.

The protein resides in the cytoplasm. Functionally, 3'-5' exonuclease. The sequence is that of 3'-5' exonuclease DinG from Bacillus subtilis (strain 168).